The chain runs to 250 residues: Low affinity immunoglobulin gamma Fc region receptor III-A (250 aa).

Positions 1-16 are cleaved as a signal peptide; the sequence is MWQLLPPAALLLLVSA. Residues 17–208 are Extracellular-facing; that stretch reads DTQTADPSKA…VSSFFLPWHQ (192 aa). Ig-like C2-type domains follow at residues 23-105 and 99-189; these read PSKA…LEVH and PVKL…VQIT. Disulfide bonds link C47/C89 and C128/C172. N-linked (GlcNAc...) asparagine glycosylation is found at N56 and N63. N-linked (GlcNAc...) asparagine glycosylation occurs at N180. A helical membrane pass occupies residues 209–225; the sequence is ITFCLVMGVLFAVDTGL. The Cytoplasmic segment spans residues 226–250; that stretch reads YFSVRRHLQSSEEWRDGKVTWSKGP.

In terms of assembly, forms a heterooligomeric complex with ITAM-containing signaling subunits FCER1G. Interacts (via transmembrane domain) with signaling subunits; this interaction is a prerequisite for receptor complex expression on the cell surface and intracellular signal transduction. Binds the Fc region of antigen-complexed IgG. In terms of tissue distribution, expressed in gamma-delta T cells.

It localises to the cell membrane. Its function is as follows. Receptor for the invariable Fc fragment of immunoglobulin gamma (IgG). Optimally activated upon binding of clustered antigen-IgG complexes displayed on cell surfaces, triggers lysis of antibody-coated cells, a process known as antibody-dependent cellular cytotoxicity (ADCC). Does not bind free monomeric IgG, thus avoiding inappropriate effector cell activation in the absence of antigenic trigger. Mediates IgG effector functions on natural killer (NK) cells. Binds antigen-IgG complexes generated upon infection and triggers NK cell-dependent cytokine production and degranulation to limit viral load and propagation. Fc-binding subunit that associates with FCER1G adapters to form functional signaling complexes. Following the engagement of antigen-IgG complexes, triggers phosphorylation of immunoreceptor tyrosine-based activation motif (ITAM)-containing adapter with subsequent activation of phosphatidylinositol 3-kinase signaling and sustained elevation of intracellular calcium that ultimately drive NK cell activation. Mediates enhanced ADCC in response to afucosylated IgGs. The chain is Low affinity immunoglobulin gamma Fc region receptor III-A from Bos taurus (Bovine).